Consider the following 129-residue polypeptide: Small ribosomal subunit protein bS18c (129 aa).

The tract at residues 1-20 (MGTSNTQKPQKQVPKRKKYK) is disordered.

It belongs to the bacterial ribosomal protein bS18 family. Part of the 30S ribosomal subunit.

The protein localises to the plastid. It is found in the chloroplast. The chain is Small ribosomal subunit protein bS18c from Stigeoclonium helveticum (Green alga).